The sequence spans 381 residues: Chitin deacetylase 8 (381 aa).

Residues 1-18 (MKRLSVLCSLLLVAAALG) form the signal peptide. Intrachain disulfides connect Cys27-Cys39 and Cys32-Cys37. Zn(2+)-binding residues include Asp63, His117, and His121. Disulfide bonds link Cys86–Cys335, Cys211–Cys216, Cys240–Cys246, Cys343–Cys365, and Cys348–Cys368. Asn171 is a glycosylation site (N-linked (GlcNAc...) asparagine).

It belongs to the carbohydrate esterase 4 (CE4) family. Zn(2+) is required as a cofactor. Strongly expressed in the midgut. Has little or no expression in other tissues tested.

The protein resides in the secreted. The enzyme catalyses [(1-&gt;4)-N-acetyl-beta-D-glucosaminyl](n) + n H2O = chitosan + n acetate. Functionally, hydrolyzes the N-acetamido groups of N-acetyl-D-glucosamine (GlcNAc) residues in chitin. Shows activity towards the chitinous oligomers GlcNAc(3), GlcNAc(4), GlcNAc(5) and GlcNAc(6), but not GlcNAc or GlcNAc(2). Requires the substrate to occupy subsites 0, +1, and +2 for optimum catalysis. The polypeptide is Chitin deacetylase 8 (Bombyx mori (Silk moth)).